The following is a 197-amino-acid chain: Adenine phosphoribosyltransferase (197 aa).

The protein belongs to the purine/pyrimidine phosphoribosyltransferase family. As to quaternary structure, homodimer.

It is found in the cytoplasm. It carries out the reaction AMP + diphosphate = 5-phospho-alpha-D-ribose 1-diphosphate + adenine. The protein operates within purine metabolism; AMP biosynthesis via salvage pathway; AMP from adenine: step 1/1. Functionally, catalyzes a salvage reaction resulting in the formation of AMP, that is energically less costly than de novo synthesis. This is Adenine phosphoribosyltransferase from Ralstonia nicotianae (strain ATCC BAA-1114 / GMI1000) (Ralstonia solanacearum).